Reading from the N-terminus, the 185-residue chain is Probable RNA 2'-phosphotransferase (185 aa).

It belongs to the KptA/TPT1 family.

Removes the 2'-phosphate from RNA via an intermediate in which the phosphate is ADP-ribosylated by NAD followed by a presumed transesterification to release the RNA and generate ADP-ribose 1''-2''-cyclic phosphate (APPR&gt;P). May function as an ADP-ribosylase. The polypeptide is Probable RNA 2'-phosphotransferase (Bacillus thuringiensis subsp. konkukian (strain 97-27)).